The primary structure comprises 327 residues: Phospho-N-acetylmuramoyl-pentapeptide-transferase (327 aa).

Transmembrane regions (helical) follow at residues 3 to 23 (IALIAGIVTFILTIIGIPAFI), 51 to 71 (TMGGTVFLLTSVLASFVIGLF), 75 to 95 (LSNGLIMILFILVLYGVVGFL), 115 to 135 (LFLQLVGGVVFYFFYNQHGAG), 140 to 160 (IFTVPVQLGFLYVFFVLFWLI), 172 to 192 (IDGLASISVVISLVAYAVIAV), 197 to 217 (FDILIVIISMIGGLLGFFVFN), 223 to 243 (IFMGDVGSLALGGMLAAISIS), 248 to 268 (WTLLLIGIVYVFETTSVMMQV), and 306 to 326 (VDFFFWGIGIVGSLLTLAILY).

This sequence belongs to the glycosyltransferase 4 family. MraY subfamily. Mg(2+) serves as cofactor.

The protein resides in the cell membrane. It carries out the reaction UDP-N-acetyl-alpha-D-muramoyl-L-alanyl-gamma-D-glutamyl-L-lysyl-D-alanyl-D-alanine + di-trans,octa-cis-undecaprenyl phosphate = Mur2Ac(oyl-L-Ala-gamma-D-Glu-L-Lys-D-Ala-D-Ala)-di-trans,octa-cis-undecaprenyl diphosphate + UMP. The protein operates within cell wall biogenesis; peptidoglycan biosynthesis. In terms of biological role, catalyzes the initial step of the lipid cycle reactions in the biosynthesis of the cell wall peptidoglycan: transfers peptidoglycan precursor phospho-MurNAc-pentapeptide from UDP-MurNAc-pentapeptide onto the lipid carrier undecaprenyl phosphate, yielding undecaprenyl-pyrophosphoryl-MurNAc-pentapeptide, known as lipid I. The polypeptide is Phospho-N-acetylmuramoyl-pentapeptide-transferase (Streptococcus sanguinis (strain SK36)).